Here is a 734-residue protein sequence, read N- to C-terminus: Photosystem I P700 chlorophyll a apoprotein A2 (734 aa).

Transmembrane regions (helical) follow at residues 46–69 (IFASHFGQLTVIFLWTSGNLFHVA), 135–158 (LYTGAIFLLALSALFLIAGWLHLQ), 175–199 (LNHHLSGLFGVSSLAWAGHLVHVAI), 273–291 (IAHHHLAIAVVFIIAGHMY), 330–353 (LHFQLGLALAALGVITSLVAQHMY), 369–395 (AALYTHHQYIAGFLMTGAFAHGAIFFI), 417–439 (AIISHLSWASLFLGFHTLGLYVH), and 517–535 (FLVHHAIALGLHTTTLILV). Residues C559 and C568 each coordinate [4Fe-4S] cluster. 2 helical membrane passes run 575-596 (AFYLAVFWMLNTIGWVTFYWHW) and 643-665 (LSVWAWMFLFGHLVWAIGFMFLI). 3 residues coordinate chlorophyll a: H654, M662, and Y670. W671 is a phylloquinone binding site. Residues 707 to 727 (LVGLAHFSVGYIFTYAAFLIA) traverse the membrane as a helical segment.

Belongs to the PsaA/PsaB family. The PsaA/B heterodimer binds the P700 chlorophyll special pair and subsequent electron acceptors. PSI consists of a core antenna complex that captures photons, and an electron transfer chain that converts photonic excitation into a charge separation. The eukaryotic PSI reaction center is composed of at least 11 subunits. It depends on P700 is a chlorophyll a/chlorophyll a' dimer, A0 is one or more chlorophyll a, A1 is one or both phylloquinones and FX is a shared 4Fe-4S iron-sulfur center. as a cofactor.

The protein localises to the plastid. Its subcellular location is the chloroplast thylakoid membrane. It catalyses the reaction reduced [plastocyanin] + hnu + oxidized [2Fe-2S]-[ferredoxin] = oxidized [plastocyanin] + reduced [2Fe-2S]-[ferredoxin]. In terms of biological role, psaA and PsaB bind P700, the primary electron donor of photosystem I (PSI), as well as the electron acceptors A0, A1 and FX. PSI is a plastocyanin-ferredoxin oxidoreductase, converting photonic excitation into a charge separation, which transfers an electron from the donor P700 chlorophyll pair to the spectroscopically characterized acceptors A0, A1, FX, FA and FB in turn. Oxidized P700 is reduced on the lumenal side of the thylakoid membrane by plastocyanin. The sequence is that of Photosystem I P700 chlorophyll a apoprotein A2 from Psilotum nudum (Whisk fern).